The following is a 225-amino-acid chain: Ribosomal RNA small subunit methyltransferase G (225 aa).

Residues G89, L94, 140–141 (IE), and R157 each bind S-adenosyl-L-methionine.

It belongs to the methyltransferase superfamily. RNA methyltransferase RsmG family.

It is found in the cytoplasm. It carries out the reaction guanosine(527) in 16S rRNA + S-adenosyl-L-methionine = N(7)-methylguanosine(527) in 16S rRNA + S-adenosyl-L-homocysteine. Specifically methylates the N7 position of guanine in position 527 of 16S rRNA. The protein is Ribosomal RNA small subunit methyltransferase G of Psychrobacter sp. (strain PRwf-1).